Reading from the N-terminus, the 340-residue chain is Mitochondrial amidoxime-reducing component 1 (340 aa).

Residue Gly2 is the site of N-myristoyl glycine attachment. The Mitochondrial matrix portion of the chain corresponds to 2-24 (GAGSWALTLFGFSAFRVPGQPRS). Residues 25–44 (TWLGVAALGLAAVALGTVAW) form a helical; Signal-anchor for type II membrane protein membrane-spanning segment. Residues 45–340 (RRARPRRRRR…VGDPVYLLGQ (296 aa)) are Cytoplasmic-facing. Residues Lys70, Ser71, and Arg95 each coordinate Mo-molybdopterin. Residues 96-186 (FWLVINEEGN…KMQSCRLVHF (91 aa)) are MOSC N-terminal region. Positions 191-338 (RPRSSRQMKA…IRVGDPVYLL (148 aa)) constitute an MOSC domain. Ser214, Arg241, Asn243, Thr274, Arg275, Cys276, and Tyr320 together coordinate Mo-molybdopterin.

In terms of assembly, component of a complex composed of cytochrome b5, NADH-cytochrome b5 reductase and MTARC1. Mo-molybdopterin serves as cofactor.

It is found in the mitochondrion outer membrane. Its subcellular location is the membrane. The catalysed reaction is N(omega)-hydroxy-L-arginine + 2 Fe(II)-[cytochrome b5] + 2 H(+) = L-arginine + 2 Fe(III)-[cytochrome b5] + H2O. Catalyzes the reduction of N-oxygenated molecules, acting as a counterpart of cytochrome P450 and flavin-containing monooxygenases in metabolic cycles. As a component of prodrug-converting system, reduces a multitude of N-hydroxylated prodrugs particularly amidoximes, leading to increased drug bioavailability. May be involved in mitochondrial N(omega)-hydroxy-L-arginine (NOHA) reduction, regulating endogenous nitric oxide levels and biosynthesis. Postulated to cleave the N-OH bond of N-hydroxylated substrates in concert with electron transfer from NADH to cytochrome b5 reductase then to cytochrome b5, the ultimate electron donor that primes the active site for substrate reduction. This Mus musculus (Mouse) protein is Mitochondrial amidoxime-reducing component 1 (Mtarc1).